A 165-amino-acid chain; its full sequence is Protein YELLOW LEAF 1, choloroplastic (165 aa).

A chloroplast-targeting transit peptide spans 1-51 (MPPLATMSSPGSLLLLTPAVYQGIGRNRGGQSQEGQSISSSRSLKTKLSVS). The tract at residues 71–118 (TQTARRKSFSGPTSPPSGSVKEKVRSPKLDDGGTGFPPFRFGGGGGGG) is disordered. A compositionally biased stretch (low complexity) spans 79-89 (FSGPTSPPSGS). Positions 90–101 (VKEKVRSPKLDD) are enriched in basic and acidic residues.

Interacts with atpB. As to expression, highly expressed in leaves. Expressed in leaf sheaths. Expressed at low levels in stems.

The protein resides in the plastid. It is found in the chloroplast. Required for photosynthetic protein complex assembly in chloroplast thylakoid membranes during leaf development. Maintains the abundance of the core protein complex PsaA-PsaB of photosystem I (PSI) in the thylakoid membrane. May play a role in the efficient biogenesis of the chloroplast ATP synthase complex, possibly by interacting with the beta subunit atpB. The chain is Protein YELLOW LEAF 1, choloroplastic from Oryza sativa subsp. japonica (Rice).